Reading from the N-terminus, the 132-residue chain is Large-conductance mechanosensitive channel (132 aa).

Helical transmembrane passes span 14–34 (VVDL…VSSL), 38–58 (IITP…LHFG), and 67–87 (GNFI…FMFI).

Belongs to the MscL family. Homopentamer.

The protein resides in the cell membrane. In terms of biological role, channel that opens in response to stretch forces in the membrane lipid bilayer. May participate in the regulation of osmotic pressure changes within the cell. This chain is Large-conductance mechanosensitive channel, found in Bacillus cereus (strain G9842).